The chain runs to 217 residues: Carbon disulfide hydrolase (217 aa).

Positions 39, 98, and 101 each coordinate Zn(2+). The tract at residues 192-217 (DKEKRARTDCTPTPYGVKGNQPPRWK) is disordered.

Belongs to the beta-class carbonic anhydrase family. As to quaternary structure, forms only homooctamers in solution. Requires Zn(2+) as cofactor.

The enzyme catalyses carbon disulfide + 2 H2O = 2 hydrogen sulfide + CO2 + 2 H(+). Its pathway is sulfur metabolism; hydrogen sulfide biosynthesis. Its function is as follows. Catalyzes the conversion of carbon disulfide into hydrogen sulfide and carbon dioxide, with carbonyl sulfide as an intermediate. Likely plays a key role in sulfur metabolism that allows A.thiooxidans S1p to grow on carbon disulfide as the main carbon and energy source. Does not show carbonic anhydrase activity (hydration of CO(2) to carbonate). The protein is Carbon disulfide hydrolase of Acidithiobacillus thiooxidans (Thiobacillus thiooxidans).